The chain runs to 168 residues: 3-dehydroquinate dehydratase (168 aa).

The active-site Proton acceptor is the Tyr22. Substrate is bound by residues Asn76, His82, and Asp89. Catalysis depends on His102, which acts as the Proton donor. Residues 103–104 (LT) and Arg113 each bind substrate.

This sequence belongs to the type-II 3-dehydroquinase family. Homododecamer.

It catalyses the reaction 3-dehydroquinate = 3-dehydroshikimate + H2O. Its pathway is metabolic intermediate biosynthesis; chorismate biosynthesis; chorismate from D-erythrose 4-phosphate and phosphoenolpyruvate: step 3/7. Functionally, catalyzes a trans-dehydration via an enolate intermediate. The protein is 3-dehydroquinate dehydratase of Helicobacter acinonychis (strain Sheeba).